A 213-amino-acid chain; its full sequence is Glycerol-3-phosphate acyltransferase (213 aa).

6 consecutive transmembrane segments (helical) span residues 3–23, 48–68, 71–91, 119–139, 144–164, and 165–185; these read IIIL…GLWI, ILGV…GTLA, LPLI…LAVI, PFFL…FSMI, VVAA…GFIL, and TSYD…IIFR.

It belongs to the PlsY family. Probably interacts with PlsX.

The protein resides in the cell membrane. It catalyses the reaction an acyl phosphate + sn-glycerol 3-phosphate = a 1-acyl-sn-glycero-3-phosphate + phosphate. Its pathway is lipid metabolism; phospholipid metabolism. Functionally, catalyzes the transfer of an acyl group from acyl-phosphate (acyl-PO(4)) to glycerol-3-phosphate (G3P) to form lysophosphatidic acid (LPA). This enzyme utilizes acyl-phosphate as fatty acyl donor, but not acyl-CoA or acyl-ACP. The polypeptide is Glycerol-3-phosphate acyltransferase (Lactococcus lactis subsp. cremoris (strain SK11)).